Reading from the N-terminus, the 262-residue chain is Tryptophan synthase alpha chain (262 aa).

Active-site proton acceptor residues include Glu-49 and Asp-60.

Belongs to the TrpA family. In terms of assembly, tetramer of two alpha and two beta chains.

It catalyses the reaction (1S,2R)-1-C-(indol-3-yl)glycerol 3-phosphate + L-serine = D-glyceraldehyde 3-phosphate + L-tryptophan + H2O. Its pathway is amino-acid biosynthesis; L-tryptophan biosynthesis; L-tryptophan from chorismate: step 5/5. In terms of biological role, the alpha subunit is responsible for the aldol cleavage of indoleglycerol phosphate to indole and glyceraldehyde 3-phosphate. This chain is Tryptophan synthase alpha chain, found in Caldanaerobacter subterraneus subsp. tengcongensis (strain DSM 15242 / JCM 11007 / NBRC 100824 / MB4) (Thermoanaerobacter tengcongensis).